We begin with the raw amino-acid sequence, 1071 residues long: DNA-directed RNA polymerase subunit beta (1071 aa).

Belongs to the RNA polymerase beta chain family. In terms of assembly, in plastids the minimal PEP RNA polymerase catalytic core is composed of four subunits: alpha, beta, beta', and beta''. When a (nuclear-encoded) sigma factor is associated with the core the holoenzyme is formed, which can initiate transcription.

It localises to the plastid. Its subcellular location is the chloroplast. It catalyses the reaction RNA(n) + a ribonucleoside 5'-triphosphate = RNA(n+1) + diphosphate. In terms of biological role, DNA-dependent RNA polymerase catalyzes the transcription of DNA into RNA using the four ribonucleoside triphosphates as substrates. In Adiantum capillus-veneris (Maidenhair fern), this protein is DNA-directed RNA polymerase subunit beta.